Here is a 312-residue protein sequence, read N- to C-terminus: Short chain dehydrogenase pgmD (312 aa).

NADP(+)-binding residues include Val-46, Ile-47, Lys-171, Tyr-207, Lys-211, and Thr-242. Tyr-207 acts as the Proton donor in catalysis. Lys-211 (lowers pKa of active site Tyr) is an active-site residue.

Belongs to the short-chain dehydrogenases/reductases (SDR) family.

It participates in pigment biosynthesis. Its pathway is secondary metabolite biosynthesis. Its function is as follows. Short chain dehydrogenase; part of the gene cluster that mediates the biosynthesis of pleosporalin A, ascomycone A, as well as a third cryptic naphthoquinone derived pigment, all responsible for the coloration of conidia. Essential for the production of pleosporalin A, but not the 2 other final products. The pathway begins with the biosynthesis of the cyclized heptaketide 3-acetonyl-1,6,8-trihydroxy-2-naphthaldehyde by the NR-PKS pgmA. The C-6 hydroxyl group is further methylated by the O-methyltransferase pgmB to yield fusarubinaldehyde which is in turn oxidized by the cytochrome P450 monooxygenase pgmC at C-9. The C-1 hydroxyl group is then methylated spontaneously. Although pgmE, pgmD and pgmH are essential for the production of pleosporalin A, it is not the case for the 2 other final products and it remains difficult to assign a specific function to each enzyme. PgmF and pgmG seem not to be involved in pigment biosynthesis although they were regulated by the cluster-specific transcription factor pgmR. The protein is Short chain dehydrogenase pgmD of Aspergillus terreus (strain NIH 2624 / FGSC A1156).